A 227-amino-acid chain; its full sequence is Glial cell line-derived neurotrophic factor (227 aa).

The signal sequence occupies residues Met1–Ser19. A propeptide spanning residues Ile20–Leu93 is cleaved from the precursor. Disordered regions lie at residues Arg32 to Ala61 and Leu93 to Ala113. Disulfide bonds link Cys134–Cys195, Cys161–Cys224, and Cys165–Cys226. Residues Asn142 and Asn178 are each glycosylated (N-linked (GlcNAc...) asparagine).

It belongs to the TGF-beta family. GDNF subfamily. In terms of assembly, homodimer; disulfide-linked. Interacts with GFRA1 coreceptor and RET: forms a 2:2:2 ternary complex composed of GDNF ligand, GFRA1 and RET receptor. In terms of tissue distribution, from stage 22, expressed in somites and the pronephros. At stage 24 and 26, expressed in the pharyngeal arches I-III. At stage 31, expression in the eye, central nervous system and pharyngeal arches IV and V increases. Up to stage 34, expression becomes intense at the oral cavity and lateral line structures. At this stage, expression weakens in the pharyngeal arches, and increases in the epibranchial arches. Expressed in the digestive tract in stage 34 embryos.

It localises to the secreted. Functionally, neurotrophic factor that enhances survival and morphological differentiation of dopaminergic neurons and increases their high-affinity dopamine uptake. Acts by binding to its coreceptor, GFRA1, leading to autophosphorylation and activation of the RET receptor. This is Glial cell line-derived neurotrophic factor from Xenopus laevis (African clawed frog).